The primary structure comprises 85 residues: Protein AC4 (85 aa).

Gly-2 carries the N-myristoyl glycine; by host lipid modification.

It belongs to the geminiviridae protein AC4/C4 family. As to quaternary structure, interacts with Arabidopsis thaliana ASK7/ASK-eta and ASK6/ASK-zeta proteins. In terms of processing, phosphorylated by Arabidopsis thaliana ASK7/ASK-eta mainly on threonine and serine residues.

It localises to the host cell membrane. In terms of biological role, pathogenicity determinant. May act as a suppressor of RNA-mediated gene silencing, also known as post-transcriptional gene silencing (PTGS), a mechanism of plant viral defense that limits the accumulation of viral RNAs. May repress the AL61 promoter. This Solanum lycopersicum (Tomato) protein is Protein AC4.